The primary structure comprises 285 residues: Bifunctional protein FolD (285 aa).

Residues 165 to 167 (GRS), Ser190, and Ile231 contribute to the NADP(+) site.

It belongs to the tetrahydrofolate dehydrogenase/cyclohydrolase family. Homodimer.

The enzyme catalyses (6R)-5,10-methylene-5,6,7,8-tetrahydrofolate + NADP(+) = (6R)-5,10-methenyltetrahydrofolate + NADPH. The catalysed reaction is (6R)-5,10-methenyltetrahydrofolate + H2O = (6R)-10-formyltetrahydrofolate + H(+). It participates in one-carbon metabolism; tetrahydrofolate interconversion. In terms of biological role, catalyzes the oxidation of 5,10-methylenetetrahydrofolate to 5,10-methenyltetrahydrofolate and then the hydrolysis of 5,10-methenyltetrahydrofolate to 10-formyltetrahydrofolate. In Verminephrobacter eiseniae (strain EF01-2), this protein is Bifunctional protein FolD.